Here is a 1044-residue protein sequence, read N- to C-terminus: Translation initiation factor IF-2 (1044 aa).

Residues 55 to 458 form a disordered region; the sequence is EAQEGQGAGK…KRKASAQERR (404 aa). The segment covering 57-77 has biased composition (low complexity); that stretch reads QEGQGAGKSAAKSAKPAAQPK. A compositionally biased stretch (basic and acidic residues) spans 104-146; that stretch reads LSEKRERRPLTERRPLAERRPLAERPLVDRPVTERPLAERPAA. 3 stretches are compositionally biased toward low complexity: residues 147-168, 190-231, and 254-265; these read ELRP…AQPV, KAQP…QKPA, and ASSRPASAAPAA. Positions 267–281 are enriched in basic and acidic residues; that stretch reads GEKRPAAAAERREEP. 2 stretches are compositionally biased toward low complexity: residues 352–375 and 383–395; these read AAGQ…AGAP and APQR…APLA. The span at 399-444 shows a compositional bias: basic and acidic residues; the sequence is LDPKVAEQAKAGEGKPRYGQSGDKRRADLYDRREHPSSQPSEEKLF. The tr-type G domain maps to 546-714; it reads PRHPVVTIMG…ILVLAEVSDL (169 aa). Residues 555–562 are G1; it reads GHVDHGKT. 555–562 contributes to the GTP binding site; it reads GHVDHGKT. The segment at 580 to 584 is G2; the sequence is GITQH. A G3 region spans residues 601–604; it reads DTPG. Residues 601 to 605 and 655 to 658 each bind GTP; these read DTPGH and NKID. The interval 655–658 is G4; that stretch reads NKID. The segment at 691 to 693 is G5; the sequence is SAK.

The protein belongs to the TRAFAC class translation factor GTPase superfamily. Classic translation factor GTPase family. IF-2 subfamily.

It localises to the cytoplasm. Its function is as follows. One of the essential components for the initiation of protein synthesis. Protects formylmethionyl-tRNA from spontaneous hydrolysis and promotes its binding to the 30S ribosomal subunits. Also involved in the hydrolysis of GTP during the formation of the 70S ribosomal complex. The polypeptide is Translation initiation factor IF-2 (Symbiobacterium thermophilum (strain DSM 24528 / JCM 14929 / IAM 14863 / T)).